A 373-amino-acid polypeptide reads, in one-letter code: MKLFFRFVTLVAVLAMSLANVAPAWALTSRIKDIASLQAGRDNQLIGYGLIVGLQGTGDGFRASPFTEQSMRAMLQNLGISTQGGQSNAKNTAAVMVTANLPPFASPGSRIDVTVSSLGDATSLRGGTLVMTSLSGADGQIYAVAQGAVIVSGFQAQGQAATVTEGVTTAGRVPGGAIIERELPSRFKDSVNLVLQLRNPDFSTAIRIADIVNGYASARFGGPVAEAKDSQEVVIQKPRAADLTRLMADVENLIVETDTPAKVVINERTGTIVIGSDVRVSPVAVSYGTLTVQVTETPQIIQPEPFSRGRTAVQPQTDIAAEQTGGRVAIIDGPDLRTLVAGLNNIGVKPDGIIAILQGIKSAGALQAELVLQ.

An N-terminal signal peptide occupies residues 1-26 (MKLFFRFVTLVAVLAMSLANVAPAWA).

Belongs to the FlgI family. In terms of assembly, the basal body constitutes a major portion of the flagellar organelle and consists of four rings (L,P,S, and M) mounted on a central rod.

The protein resides in the periplasm. The protein localises to the bacterial flagellum basal body. In terms of biological role, assembles around the rod to form the L-ring and probably protects the motor/basal body from shearing forces during rotation. The protein is Flagellar P-ring protein of Rhizobium johnstonii (strain DSM 114642 / LMG 32736 / 3841) (Rhizobium leguminosarum bv. viciae).